A 330-amino-acid chain; its full sequence is 2-keto-3-deoxygluconate permease (330 aa).

10 helical membrane passes run 10 to 30, 42 to 62, 77 to 97, 100 to 120, 140 to 160, 163 to 183, 200 to 220, 224 to 244, 254 to 274, and 289 to 309; these read VPGG…TFAP, ALIT…GATI, LLLG…QFIP, GIQS…VMNE, GAFA…TFGV, LAAF…LGCI, PAII…GMLI, LLGI…LFLL, VAGV…YALA, and AIIA…TVWV.

This sequence belongs to the KdgT transporter family.

The protein localises to the cell membrane. The catalysed reaction is 2-dehydro-3-deoxy-D-gluconate(in) + H(+)(in) = 2-dehydro-3-deoxy-D-gluconate(out) + H(+)(out). In terms of biological role, catalyzes the proton-dependent uptake of 2-keto-3-deoxygluconate (KDG) into the cell. This is 2-keto-3-deoxygluconate permease from Bacillus subtilis (strain 168).